The sequence spans 395 residues: Calreticulin (395 aa).

A signal peptide spans 1 to 15; it reads MKSLCLLAIVAVVSA. A disulfide bond links cysteine 101 and cysteine 133. 4 residues coordinate an alpha-D-glucoside: tyrosine 105, lysine 107, tyrosine 124, and aspartate 131. Repeat copies occupy residues 186–197, 205–216, 222–233, 239–250, 254–264, 268–278, and 282–292. The segment at 186–250 is 4 X approximate repeats; sequence AQTGSLEEDW…DAKKPEDWDD (65 aa). The interval 193–301 is P-domain; it reads EDWDLLPAKK…PEYTPDDELY (109 aa). The segment covering 202 to 212 has biased composition (basic and acidic residues); sequence KIKDPDAKKPE. Residues 202 to 255 are disordered; sequence KIKDPDAKKPEDWDEREYIDDAEDAKPEDWEKPEHIPDPDAKKPEDWDDEMDGE. Positions 213–224 are enriched in acidic residues; sequence DWDEREYIDDAE. Residues 225 to 246 are compositionally biased toward basic and acidic residues; it reads DAKPEDWEKPEHIPDPDAKKPE. A 3 X approximate repeats region spans residues 254–292; sequence GEWEPPMIDNPEYKGEWKPKQIKNPAYKGKWIHPEIENP. The tract at residues 302–395 is C-domain; sequence SYESWGAIGF…KEEEEGHDEL (94 aa). Aspartate 312 is a binding site for an alpha-D-glucoside. Basic and acidic residues predominate over residues 340–380; that stretch reads ETFDKLKTVEKEKKEKADEETRKAEEEARKKAEEEKEAKKD. The segment at 340-395 is disordered; that stretch reads ETFDKLKTVEKEKKEKADEETRKAEEEARKKAEEEKEAKKDDDEEEKEEEEGHDEL. Residues 381–395 are compositionally biased toward acidic residues; that stretch reads DDEEEKEEEEGHDEL. The Prevents secretion from ER motif lies at 392-395; it reads HDEL.

The protein belongs to the calreticulin family. In terms of processing, cleaved by caspase ced-3 in vitro.

Its subcellular location is the endoplasmic reticulum lumen. Molecular calcium-binding chaperone promoting folding, oligomeric assembly and quality control in the endoplasmic reticulum (ER) via the calreticulin/calnexin cycle. This lectin may interact transiently with almost all of the monoglucosylated glycoproteins that are synthesized in the ER. Probably by controlling the folding of extracellular matrix protein unc-52/Perlecan, may play a role in the formation of fibrous organelles, a hemidesmosome-like structure attaching muscles to the epidermis. Protects dopaminergic neurons against oxidative stress-induced neurodegeneration. May play a role in protection against ER stress. Plays a role in modulating lifespan, acting by influencing ER calcium homeostasis. The sequence is that of Calreticulin (crt-1) from Caenorhabditis elegans.